Here is a 702-residue protein sequence, read N- to C-terminus: Methionine--tRNA ligase (702 aa).

The short motif at Pro23–His33 is the 'HIGH' region element. Zn(2+) contacts are provided by Cys154, Cys157, Cys167, and Cys170. The 'KMSKS' region signature appears at Lys341 to Ser345. Residue Lys344 participates in ATP binding. The disordered stretch occupies residues Leu562–Pro593. The span at Ala569 to Asn578 shows a compositional bias: polar residues. The 104-residue stretch at Asp599–Arg702 folds into the tRNA-binding domain.

Belongs to the class-I aminoacyl-tRNA synthetase family. MetG type 1 subfamily. Homodimer. Requires Zn(2+) as cofactor.

It is found in the cytoplasm. It carries out the reaction tRNA(Met) + L-methionine + ATP = L-methionyl-tRNA(Met) + AMP + diphosphate. Is required not only for elongation of protein synthesis but also for the initiation of all mRNA translation through initiator tRNA(fMet) aminoacylation. In Xylella fastidiosa (strain M23), this protein is Methionine--tRNA ligase.